A 222-amino-acid polypeptide reads, in one-letter code: Orotate phosphoribosyltransferase (222 aa).

Lys-29 provides a ligand contact to 5-phospho-alpha-D-ribose 1-diphosphate. 37-38 provides a ligand contact to orotate; the sequence is FF. 5-phospho-alpha-D-ribose 1-diphosphate-binding positions include 75–76, Arg-101, Lys-102, Lys-105, His-107, and 126–134; these read YK and DDVISAGTS. The orotate site is built by Ser-130 and Arg-158.

Belongs to the purine/pyrimidine phosphoribosyltransferase family. PyrE subfamily. Homodimer. Mg(2+) serves as cofactor.

It carries out the reaction orotidine 5'-phosphate + diphosphate = orotate + 5-phospho-alpha-D-ribose 1-diphosphate. The protein operates within pyrimidine metabolism; UMP biosynthesis via de novo pathway; UMP from orotate: step 1/2. Catalyzes the transfer of a ribosyl phosphate group from 5-phosphoribose 1-diphosphate to orotate, leading to the formation of orotidine monophosphate (OMP). This is Orotate phosphoribosyltransferase from Polynucleobacter necessarius subsp. necessarius (strain STIR1).